The chain runs to 101 residues: Urease subunit gamma (101 aa).

Belongs to the urease gamma subunit family. In terms of assembly, heterotrimer of UreA (gamma), UreB (beta) and UreC (alpha) subunits. Three heterotrimers associate to form the active enzyme.

The protein localises to the cytoplasm. The enzyme catalyses urea + 2 H2O + H(+) = hydrogencarbonate + 2 NH4(+). Its pathway is nitrogen metabolism; urea degradation; CO(2) and NH(3) from urea (urease route): step 1/1. This is Urease subunit gamma from Geobacillus kaustophilus (strain HTA426).